A 529-amino-acid chain; its full sequence is L-ornithine N(5)-monooxygenase (529 aa).

FAD contacts are provided by residues 100–108 (EKQPQFAWH) and glutamine 119. Lysine 124 lines the substrate pocket. Valine 185 contacts FAD. 270-273 (NGQS) contacts NADP(+). Substrate is bound by residues 309–312 (NEIF) and asparagine 339. 339 to 341 (NYG) provides a ligand contact to NADP(+). 493–495 (TLL) contacts FAD. Serine 496 serves as a coordination point for substrate.

It belongs to the lysine N(6)-hydroxylase/L-ornithine N(5)-oxygenase family. As to quaternary structure, homotetramer. Requires FAD as cofactor.

The enzyme catalyses L-ornithine + NADPH + O2 = N(5)-hydroxy-L-ornithine + NADP(+) + H2O. It catalyses the reaction L-ornithine + NADH + O2 = N(5)-hydroxy-L-ornithine + NAD(+) + H2O. It participates in siderophore biosynthesis. In terms of biological role, L-ornithine N(5)-monooxygenase; part of the gene cluster that mediates the biosynthesis of hydroxamate-containing siderophores that play a critical role in virulence. Cochliobolus heterostrophus produces extracellular coprogen-type siderophores including coprogen, neocoprogen I and neocoprogen II, as well as the intracellular siderophore ferricrocin. The role of extracellular siderophores is to supply iron to their producers in planta and the intracellular ferricrocin is required for intracellular iron distribution and storage with a crucial role in ascus and ascospore development. SIDA2 catalyzes the conversion of L-ornithine to N(5)-hydroxyornithine, the first step in the biosynthesis of all hydroxamate-containing siderophores. The assembly of extracellular coprogen-type siderophores is then performed by the nonribosomal peptide synthetase (NRPS) NPS6 whereas the intracellular siderophore ferricrocin is assembled by NPS2. The protein is L-ornithine N(5)-monooxygenase of Cochliobolus heterostrophus (strain C4 / ATCC 48331 / race T) (Southern corn leaf blight fungus).